A 452-amino-acid polypeptide reads, in one-letter code: Ribulose bisphosphate carboxylase large chain (452 aa).

A propeptide spanning residues 1–2 is cleaved from the precursor; the sequence is MS. Position 3 is an N-acetylproline (Pro3). Lys14 bears the N6,N6,N6-trimethyllysine mark. Substrate is bound by residues Asn123 and Thr173. Catalysis depends on Lys175, which acts as the Proton acceptor. Residue Lys177 coordinates substrate. Residues Lys201, Asp203, and Glu204 each coordinate Mg(2+). Lys201 carries the post-translational modification N6-carboxylysine. Catalysis depends on His294, which acts as the Proton acceptor. Arg295, Xaa327, and Ser379 together coordinate substrate.

The protein belongs to the RuBisCO large chain family. Type I subfamily. As to quaternary structure, heterohexadecamer of 8 large chains and 8 small chains; disulfide-linked. The disulfide link is formed within the large subunit homodimers. The cofactor is Mg(2+). Post-translationally, the disulfide bond which can form in the large chain dimeric partners within the hexadecamer appears to be associated with oxidative stress and protein turnover.

Its subcellular location is the plastid. The protein localises to the chloroplast. The catalysed reaction is 2 (2R)-3-phosphoglycerate + 2 H(+) = D-ribulose 1,5-bisphosphate + CO2 + H2O. It catalyses the reaction D-ribulose 1,5-bisphosphate + O2 = 2-phosphoglycolate + (2R)-3-phosphoglycerate + 2 H(+). RuBisCO catalyzes two reactions: the carboxylation of D-ribulose 1,5-bisphosphate, the primary event in carbon dioxide fixation, as well as the oxidative fragmentation of the pentose substrate in the photorespiration process. Both reactions occur simultaneously and in competition at the same active site. The protein is Ribulose bisphosphate carboxylase large chain of Salvadora persica (Toothbrush tree).